A 107-amino-acid chain; its full sequence is Ribonuclease P protein component 4 (107 aa).

The Zn(2+) site is built by Cys-66, Cys-69, Cys-92, and Cys-95.

It belongs to the eukaryotic/archaeal RNase P protein component 4 family. Consists of a catalytic RNA component and at least 4-5 protein subunits. Requires Zn(2+) as cofactor.

Its subcellular location is the cytoplasm. It catalyses the reaction Endonucleolytic cleavage of RNA, removing 5'-extranucleotides from tRNA precursor.. Part of ribonuclease P, a protein complex that generates mature tRNA molecules by cleaving their 5'-ends. This Methanosarcina mazei (strain ATCC BAA-159 / DSM 3647 / Goe1 / Go1 / JCM 11833 / OCM 88) (Methanosarcina frisia) protein is Ribonuclease P protein component 4.